The following is a 263-amino-acid chain: Probable methylthioribulose-1-phosphate dehydratase (263 aa).

Cysteine 102 contributes to the substrate binding site. The Zn(2+) site is built by histidine 120 and histidine 122. Glutamate 144 (proton donor/acceptor) is an active-site residue. Residue histidine 200 participates in Zn(2+) binding.

The protein belongs to the aldolase class II family. MtnB subfamily. It depends on Zn(2+) as a cofactor.

It is found in the cytoplasm. The catalysed reaction is 5-(methylsulfanyl)-D-ribulose 1-phosphate = 5-methylsulfanyl-2,3-dioxopentyl phosphate + H2O. It functions in the pathway amino-acid biosynthesis; L-methionine biosynthesis via salvage pathway; L-methionine from S-methyl-5-thio-alpha-D-ribose 1-phosphate: step 2/6. Catalyzes the dehydration of methylthioribulose-1-phosphate (MTRu-1-P) into 2,3-diketo-5-methylthiopentyl-1-phosphate (DK-MTP-1-P). In Caenorhabditis elegans, this protein is Probable methylthioribulose-1-phosphate dehydratase.